We begin with the raw amino-acid sequence, 464 residues long: Argininosuccinate lyase (464 aa).

It belongs to the lyase 1 family. Argininosuccinate lyase subfamily.

The protein resides in the cytoplasm. The catalysed reaction is 2-(N(omega)-L-arginino)succinate = fumarate + L-arginine. The protein operates within amino-acid biosynthesis; L-arginine biosynthesis; L-arginine from L-ornithine and carbamoyl phosphate: step 3/3. The sequence is that of Argininosuccinate lyase from Pseudomonas aeruginosa (strain LESB58).